Consider the following 300-residue polypeptide: 33 kDa chaperonin (300 aa).

2 disulfide bridges follow: Cys247–Cys249 and Cys280–Cys283.

This sequence belongs to the HSP33 family. Post-translationally, under oxidizing conditions two disulfide bonds are formed involving the reactive cysteines. Under reducing conditions zinc is bound to the reactive cysteines and the protein is inactive.

Its subcellular location is the cytoplasm. Redox regulated molecular chaperone. Protects both thermally unfolding and oxidatively damaged proteins from irreversible aggregation. Plays an important role in the bacterial defense system toward oxidative stress. The polypeptide is 33 kDa chaperonin (Prochlorococcus marinus (strain MIT 9312)).